Reading from the N-terminus, the 385-residue chain is 4-hydroxy-3-methylbut-2-en-1-yl diphosphate synthase (flavodoxin) (385 aa).

Cys282, Cys285, Cys317, and Glu324 together coordinate [4Fe-4S] cluster.

This sequence belongs to the IspG family. Requires [4Fe-4S] cluster as cofactor.

It carries out the reaction (2E)-4-hydroxy-3-methylbut-2-enyl diphosphate + oxidized [flavodoxin] + H2O + 2 H(+) = 2-C-methyl-D-erythritol 2,4-cyclic diphosphate + reduced [flavodoxin]. It functions in the pathway isoprenoid biosynthesis; isopentenyl diphosphate biosynthesis via DXP pathway; isopentenyl diphosphate from 1-deoxy-D-xylulose 5-phosphate: step 5/6. Converts 2C-methyl-D-erythritol 2,4-cyclodiphosphate (ME-2,4cPP) into 1-hydroxy-2-methyl-2-(E)-butenyl 4-diphosphate. This is 4-hydroxy-3-methylbut-2-en-1-yl diphosphate synthase (flavodoxin) from Nocardia farcinica (strain IFM 10152).